The sequence spans 412 residues: Intraflagellar transport protein che-13 (412 aa).

2 disordered regions span residues 1-21 (MEEE…GSAI) and 162-193 (PPKE…NFLD). Residues 165-193 (EEDEDTAVDEQDEDDDNDDIVEEPMNFLD) are compositionally biased toward acidic residues. Residues 302-393 (QLASMMSKFR…VQIGVFEQSI (92 aa)) are a coiled coil.

The protein belongs to the IFT57 family. Component of the IFT complex B composed of at least che-2, che-13, dyf-1, dyf-3, dyf-6, dyf-11, dyf-13, ift-20, ift-74, ift-81, ifta-2, osm-1, osm-5 and osm-6.

Its subcellular location is the cytoplasm. It localises to the cytoskeleton. It is found in the cilium axoneme. In terms of biological role, component of the intraflagellar transport (IFT) complex B required for transport of proteins in the motile cilium. May be required for ciliary entrance and transport of specific ciliary cargo proteins such as che-3 which are related to motility. Required for the formation of chemosensory cilia that detect chemosensory cues. The protein is Intraflagellar transport protein che-13 of Caenorhabditis elegans.